The chain runs to 311 residues: Regulator of rDNA transcription protein 6 (311 aa).

The next 2 helical transmembrane spans lie at 32–52 and 271–291; these read PHLL…SAEL and YLIV…IIVT.

The protein localises to the membrane. In terms of biological role, may be involved in the modulation of rDNA transcription. This is Regulator of rDNA transcription protein 6 (RRT6) from Saccharomyces cerevisiae (strain ATCC 204508 / S288c) (Baker's yeast).